The primary structure comprises 26 residues: Glycyl-poneratoxin (26 aa).

Arginine amide; in delta-paraponeritoxin-Pc1a is present on Arg25.

Post-translationally, the glycine-PoTx is a non-amidated form of poneratoxin, with an extra-Gly at C-terminus. This loss of amidation does not alter toxin activity on Nav1.7/SCN9A. As to expression, expressed by the venom gland.

The protein resides in the secreted. Toxin that causes pain in vertebrates by targeting tetrodotoxin (TTX)-sensitive sodium channels in peripheral sensory neurons. Also blocks synaptic transmission and stimulates smooth muscle contraction. Converts the normally rapidly activating and inactivating sodium channel current into one that does not inactivate. Is active on both Nav1.6/SCN8A and Nav1.7/SCN9A sodium channels, with a much potent activity on Nav1.6/SCN8A (EC(50)=97 nM on human channels) than on Nav1.7/SCN9A (EC(50)=2.3 uM on human and EC(50)=1.8 uM on mouse channels). On these channels, causes a sustained current, a reduction in peak current amplitude and a hyperpolarising shift. Modulates Nav1.7/SCN9A in a non-competitive manner with TTX or tetracaine. Toxin-induced persistant current is very slowly reversible with repeated wash steps over 30 minutes. In vivo, shallow intraplantar injection in mice causes immediate, long-lasting and near-maximal nocifensive behaviors, which decrease with coinjection of TTX. When tested on insects, causes paralysis but not mortality at high doses. This is Glycyl-poneratoxin from Paraponera clavata (Bullet ant).